A 434-amino-acid polypeptide reads, in one-letter code: GTPase Obg (434 aa).

Residues 2 to 160 (PTFVDQTKIE…RVLRLELKLL (159 aa)) form the Obg domain. The 174-residue stretch at 161–334 (ADVGLVGFPS…LMNDTATLVE (174 aa)) folds into the OBG-type G domain. GTP contacts are provided by residues 167-174 (GFPSVGKS), 192-196 (FTTLT), 214-217 (DLPG), 284-287 (SQMD), and 315-317 (SSV). Positions 174 and 194 each coordinate Mg(2+). The region spanning 356–434 (YKAPQKNEFT…IGKFVFEFVQ (79 aa)) is the OCT domain.

It belongs to the TRAFAC class OBG-HflX-like GTPase superfamily. OBG GTPase family. As to quaternary structure, monomer. Mg(2+) is required as a cofactor.

It localises to the cytoplasm. In terms of biological role, an essential GTPase which binds GTP, GDP and possibly (p)ppGpp with moderate affinity, with high nucleotide exchange rates and a fairly low GTP hydrolysis rate. Plays a role in control of the cell cycle, stress response, ribosome biogenesis and in those bacteria that undergo differentiation, in morphogenesis control. The polypeptide is GTPase Obg (Lactobacillus helveticus (strain DPC 4571)).